The following is a 231-amino-acid chain: MSALCPLLTPPASEALLLAQARQLSGYTLGELAAMAGITTPKDLKRDKGWIGVLLEIWLGASAGSKPEQDFAALGVELKTIPVDSLGRPLETTFVCVAPLTGNSGVTWETSHVRHKLKRVLWVPVEGDRSIPLAERRVGSPLLWSPSEEEDRQLRLDWEELMDMIVLGQVERITARHGEVLQLRPKAANARALTEAIGARGEPILTLPRGFYLKKNFTQALLARHFLLQNP.

It belongs to the MutH family.

The protein resides in the cytoplasm. Sequence-specific endonuclease that cleaves unmethylated GATC sequences. It is involved in DNA mismatch repair. This Salmonella enteritidis PT4 (strain P125109) protein is DNA mismatch repair protein MutH.